A 208-amino-acid chain; its full sequence is MVFYFTSSSVNSSTYTIYMGKDKYENEDLIKYGWPEDIWFHVDKLSSAHVYLRLQKGEKIEDIPKEVLMDCAHLVKANSIQGCKMNNVNVVYTPWSNLKKTADMDVGQIGFHRQKDVKIVTVEKKVNEILNRLEKTKLEKFPDLAAEKEGRDREERNEKKAQIQEMKRKEKEEMKKKREMDELRSYSSLMKVENMSSNQDGNDSDEFM.

The Extracellular segment spans residues 1 to 105 (MVFYFTSSSV…SNLKKTADMD (105 aa)). Positions 21-25 (KDKYE) are DNA-binding. The residue at position 23 (Lys23) is an N6-acetyllysine. Residues 106-122 (VGQIGFHRQKDVKIVTV) traverse the membrane as a helical segment. The stretch at 117–187 (VKIVTVEKKV…REMDELRSYS (71 aa)) forms a coiled coil. The Cytoplasmic portion of the chain corresponds to 123 to 208 (EKKVNEILNR…QDGNDSDEFM (86 aa)). Residues 144–184 (LAAEKEGRDREERNEKKAQIQEMKRKEKEEMKKKREMDELR) are compositionally biased toward basic and acidic residues. The segment at 144 to 208 (LAAEKEGRDR…QDGNDSDEFM (65 aa)) is disordered. The residue at position 204 (Ser204) is a Phosphoserine.

This sequence belongs to the CCDC25 family. In terms of assembly, interacts (via cytoplasmic region) with ILK.

Its subcellular location is the cell membrane. It localises to the endomembrane system. Functionally, transmembrane receptor that senses neutrophil extracellular traps (NETs) and triggers the ILK-PARVB pathway to enhance cell motility. NETs are mainly composed of DNA fibers and are released by neutrophils to bind pathogens during inflammation. Formation of NETs is also associated with cancer metastasis, NET-DNA acting as a chemotactic factor to attract cancer cells. Specifically binds NETs on its extracellular region, in particular the 8-OHdG-enriched DNA present in NETs, and recruits ILK, initiating the ILK-PARVB cascade to induce cytoskeleton rearrangement and directional migration of cells. In the context of cancer, promotes cancer metastasis by sensing NETs and promoting migration of tumor cells. This chain is Coiled-coil domain-containing protein 25, found in Mus musculus (Mouse).